Consider the following 113-residue polypeptide: Teretoxin Tan14.1 (113 aa).

The N-terminal stretch at 1-21 (MALEAQMTLRMFVLVAMASTV) is a signal peptide. The propeptide occupies 22 to 86 (HVLSSSFSED…DETSSRTGKR (65 aa)).

It belongs to the teretoxin N (TN) superfamily. In terms of processing, contains 2 disulfide bonds. Expressed by the venom duct.

It localises to the secreted. The sequence is that of Teretoxin Tan14.1 from Terebra anilis (Auger snail).